A 215-amino-acid polypeptide reads, in one-letter code: Large ribosomal subunit protein bL25 (215 aa).

Residues 1–10 are compositionally biased toward polar residues; it reads MAKSASNQLR. Disordered regions lie at residues 1–25 and 187–215; these read MAKS…SRRA and ELEG…GESE.

This sequence belongs to the bacterial ribosomal protein bL25 family. CTC subfamily. Part of the 50S ribosomal subunit; part of the 5S rRNA/L5/L18/L25 subcomplex. Contacts the 5S rRNA. Binds to the 5S rRNA independently of L5 and L18.

In terms of biological role, this is one of the proteins that binds to the 5S RNA in the ribosome where it forms part of the central protuberance. The polypeptide is Large ribosomal subunit protein bL25 (Mycobacterium bovis (strain ATCC BAA-935 / AF2122/97)).